The primary structure comprises 574 residues: Proline--tRNA ligase (574 aa).

It belongs to the class-II aminoacyl-tRNA synthetase family. ProS type 1 subfamily. As to quaternary structure, homodimer.

The protein resides in the cytoplasm. The catalysed reaction is tRNA(Pro) + L-proline + ATP = L-prolyl-tRNA(Pro) + AMP + diphosphate. Catalyzes the attachment of proline to tRNA(Pro) in a two-step reaction: proline is first activated by ATP to form Pro-AMP and then transferred to the acceptor end of tRNA(Pro). As ProRS can inadvertently accommodate and process non-cognate amino acids such as alanine and cysteine, to avoid such errors it has two additional distinct editing activities against alanine. One activity is designated as 'pretransfer' editing and involves the tRNA(Pro)-independent hydrolysis of activated Ala-AMP. The other activity is designated 'posttransfer' editing and involves deacylation of mischarged Ala-tRNA(Pro). The misacylated Cys-tRNA(Pro) is not edited by ProRS. The polypeptide is Proline--tRNA ligase (Ralstonia nicotianae (strain ATCC BAA-1114 / GMI1000) (Ralstonia solanacearum)).